The chain runs to 202 residues: Pyridoxal 5'-phosphate synthase subunit PdxT (202 aa).

48–50 (GES) contributes to the L-glutamine binding site. Cysteine 80 functions as the Nucleophile in the catalytic mechanism. L-glutamine-binding positions include arginine 112 and 139–140 (IR). Active-site charge relay system residues include histidine 180 and glutamate 182.

This sequence belongs to the glutaminase PdxT/SNO family. As to quaternary structure, in the presence of PdxS, forms a dodecamer of heterodimers. Only shows activity in the heterodimer.

It carries out the reaction aldehydo-D-ribose 5-phosphate + D-glyceraldehyde 3-phosphate + L-glutamine = pyridoxal 5'-phosphate + L-glutamate + phosphate + 3 H2O + H(+). The enzyme catalyses L-glutamine + H2O = L-glutamate + NH4(+). It functions in the pathway cofactor biosynthesis; pyridoxal 5'-phosphate biosynthesis. Its function is as follows. Catalyzes the hydrolysis of glutamine to glutamate and ammonia as part of the biosynthesis of pyridoxal 5'-phosphate. The resulting ammonia molecule is channeled to the active site of PdxS. The chain is Pyridoxal 5'-phosphate synthase subunit PdxT from Hyperthermus butylicus (strain DSM 5456 / JCM 9403 / PLM1-5).